A 315-amino-acid chain; its full sequence is Pantothenate kinase (315 aa).

Residue 94–101 (GSVAVGKS) participates in ATP binding.

It belongs to the prokaryotic pantothenate kinase family.

The protein localises to the cytoplasm. It catalyses the reaction (R)-pantothenate + ATP = (R)-4'-phosphopantothenate + ADP + H(+). It functions in the pathway cofactor biosynthesis; coenzyme A biosynthesis; CoA from (R)-pantothenate: step 1/5. The chain is Pantothenate kinase from Citrobacter koseri (strain ATCC BAA-895 / CDC 4225-83 / SGSC4696).